The primary structure comprises 530 residues: MSVDTYGETPKIKKLLEKESSLFQLSTTQLYYKIMDNNEGELTELGAINASTGKYTGRSPKDKFIVTEPSYKDNIHWGDINQPIDEETFLNLYSKVLDYLDKKDELYVFNGYAGSDKDTQLKLTVINELAWHNLFAQNMFIRPDSKEEASNIKPNFTIVSAPHFKADPEVDGTKSETFVIISFKHKTILIGGTEYAGEMKKGIFSVMNYLLPMQDIMSMHCSANVGDKGDVALFFGLSGTGKTTLSAAPDRKLIGDDEHGWNKNGIFNIEGGCYAKAINLSKEKEPQIYNAIQYGTILENTVVNERGVVDFDDNSYTENTRAAYPIHHIDNIVLPSKAAHPNTIIFLTADAFGVLPPIAKLTKSQAMYHFLSGFTSKLAGTERGVTEPEPSFSTCFGAPFLPLNPNKYADLLGELIDKHDVDVYLVNTGWTGGKYGVGRRISLHYTRYMVDQAIKGKLKNAEFTKDEKFGLSIPTEMEDVPKTILNPINAWSDSDKYRAQADDLIQRFEENFKKFGPEVEEIANTGGFNK.

Positions 58, 195, and 201 each coordinate substrate. ATP-binding positions include Lys-201, His-220, and 236 to 244; that span reads GLSGTGKTT. Mn(2+) is bound by residues Lys-201 and His-220. Mn(2+) is bound at residue Asp-257. Residues Glu-285, Arg-321, 440 to 441, and Thr-446 contribute to the ATP site; that span reads RI. A substrate-binding site is contributed by Arg-321.

The protein belongs to the phosphoenolpyruvate carboxykinase (ATP) family. The cofactor is Mn(2+).

It is found in the cytoplasm. It carries out the reaction oxaloacetate + ATP = phosphoenolpyruvate + ADP + CO2. It participates in carbohydrate biosynthesis; gluconeogenesis. Its function is as follows. Involved in the gluconeogenesis. Catalyzes the conversion of oxaloacetate (OAA) to phosphoenolpyruvate (PEP) through direct phosphoryl transfer between the nucleoside triphosphate and OAA. The chain is Phosphoenolpyruvate carboxykinase (ATP) from Staphylococcus haemolyticus (strain JCSC1435).